The following is a 271-amino-acid chain: MKGFFLIAGFLLFARALCASWNVEEGTLQLSSQDLESENAYDLKFSQIQSSTVYELTGDETLNLKFTCILNGTGAIPHQAHLLLSDTEHPTLAVIYPASVSQGGVASLELRLFDIPTSLLRSDSTLTAKLLVASFGETIPFSLPLGQLSINVPPSLYHKAEFSPLDELSPKEVILHTFSPPPKRANYFLSICFSVSVVVSLIGLLGVWQKLLPKSNVYSVSSSSFARTFGFASLAVAEILLFIYWTSLSIFQFGAYAAGVAIMCGIAAKSL.

The first 18 residues, 1–18, serve as a signal peptide directing secretion; sequence MKGFFLIAGFLLFARALC. Residues 19-187 are Lumenal-facing; that stretch reads ASWNVEEGTL…FSPPPKRANY (169 aa). A helical transmembrane segment spans residues 188–208; it reads FLSICFSVSVVVSLIGLLGVW. At 209 to 230 the chain is on the cytoplasmic side; the sequence is QKLLPKSNVYSVSSSSFARTFG. A helical membrane pass occupies residues 231 to 251; sequence FASLAVAEILLFIYWTSLSIF. At 252-271 the chain is on the lumenal side; sequence QFGAYAAGVAIMCGIAAKSL.

Its subcellular location is the endoplasmic reticulum membrane. This is an uncharacterized protein from Schizosaccharomyces pombe (strain 972 / ATCC 24843) (Fission yeast).